The sequence spans 130 residues: Small ribosomal subunit protein uS8 (130 aa).

The protein belongs to the universal ribosomal protein uS8 family. As to quaternary structure, part of the 30S ribosomal subunit.

In terms of biological role, one of the primary rRNA binding proteins, it binds directly to 16S rRNA central domain where it helps coordinate assembly of the platform of the 30S subunit. This Methanocorpusculum labreanum (strain ATCC 43576 / DSM 4855 / Z) protein is Small ribosomal subunit protein uS8.